A 760-amino-acid polypeptide reads, in one-letter code: Transferrin receptor protein 1 (760 aa).

Topologically, residues 1–65 (MMDQARSAFS…VTKPKRCGGS (65 aa)) are cytoplasmic. Residues 1–67 (MMDQARSAFS…KPKRCGGSIC (67 aa)) are mediates interaction with SH3BP4. A phosphoserine mark is found at Ser-10 and Ser-19. The residue at position 20 (Tyr-20) is a Phosphotyrosine. An Endocytosis signal motif is present at residues 20 to 23 (YTRF). Thr-21 bears the Phosphothreonine mark. At Ser-24 the chain carries Phosphoserine. The Stop-transfer sequence signature appears at 58 to 61 (KPKR). 2 S-palmitoyl cysteine lipidation sites follow: Cys-62 and Cys-67. The helical; Signal-anchor for type II membrane protein transmembrane segment at 66–86 (ICYGTIAVIIFFLIGFMIGYL) threads the bilayer. The Extracellular portion of the chain corresponds to 87–760 (GYCKGVEPKT…GDVWDIDNEF (674 aa)). Residues 223–313 (SKAATVTGKL…GTGDPYTPGF (91 aa)) enclose the PA domain. Residues Asn-251 and Asn-317 are each glycosylated (N-linked (GlcNAc...) asparagine). The interval 569 to 760 (TMDTYKELTE…GDVWDIDNEF (192 aa)) is ligand-binding. A Cell attachment site motif is present at residues 646 to 648 (RGD). 2 N-linked (GlcNAc...) asparagine glycosylation sites follow: Asn-722 and Asn-727.

Belongs to the peptidase M28 family. M28B subfamily. As to quaternary structure, homodimer; disulfide-linked. Binds one transferrin or HFE molecule per subunit. Interacts with SH3BP4. Interacts with STEAP3; facilitates TFRC endocytosis in erythroid precursor cells. Post-translationally, stearoylated by ZDHHC6 which inhibits TFRC-mediated activation of the JNK pathway and promotes mitochondrial fragmentation. Stearoylation does not affect iron uptake.

Its subcellular location is the cell membrane. The protein resides in the melanosome. Cellular uptake of iron occurs via receptor-mediated endocytosis of ligand-occupied transferrin receptor into specialized endosomes. Endosomal acidification leads to iron release. The apotransferrin-receptor complex is then recycled to the cell surface with a return to neutral pH and the concomitant loss of affinity of apotransferrin for its receptor. Transferrin receptor is necessary for development of erythrocytes and the nervous system. Positively regulates T and B cell proliferation through iron uptake. Acts as a lipid sensor that regulates mitochondrial fusion by regulating activation of the JNK pathway. When dietary levels of stearate (C18:0) are low, promotes activation of the JNK pathway, resulting in HUWE1-mediated ubiquitination and subsequent degradation of the mitofusin MFN2 and inhibition of mitochondrial fusion. When dietary levels of stearate (C18:0) are high, TFRC stearoylation inhibits activation of the JNK pathway and thus degradation of the mitofusin MFN2. Mediates uptake of NICOL1 into fibroblasts where it may regulate extracellular matrix production. This is Transferrin receptor protein 1 (TFRC) from Pongo abelii (Sumatran orangutan).